Consider the following 456-residue polypeptide: Serine/threonine-protein kinase meng-po (456 aa).

The segment at 15–78 is disordered; that stretch reads RSFGDGGSTN…RSSIYKKPDK (64 aa). Residues 22–55 are compositionally biased toward low complexity; sequence STNSRNSNNNSSTCTNHNNQKRCSTPLTPTSTST. A Protein kinase domain is found at 101–367; that stretch reads YNIEKTLAEG…VAKYMKDRWV (267 aa). Residues 107–115 and Lys130 contribute to the ATP site; that span reads LAEGCFAKI. Catalysis depends on Asp221, which acts as the Proton acceptor. Ser334 bears the Phosphoserine; by PKA mark.

The protein belongs to the protein kinase superfamily. Ser/Thr protein kinase family. Requires Mg(2+) as cofactor. In terms of tissue distribution, expressed in the mushroom bodies (at protein level).

The enzyme catalyses L-seryl-[protein] + ATP = O-phospho-L-seryl-[protein] + ADP + H(+). It catalyses the reaction L-threonyl-[protein] + ATP = O-phospho-L-threonyl-[protein] + ADP + H(+). Activated by Pka-C1-mediated phosphorylation of Ser-334. Functionally, serine/threonine-protein kinase involved in memory formation. Together with the cAMP-dependent protein kinase A Pka-C1, promotes long-term memory (LTM) by regulating CrebB stability and activity. Involved in the maintenance of anesthesia-sensitive memory (ASM) which includes short-term memory (STM) and middle-term memory (MTM). This Drosophila melanogaster (Fruit fly) protein is Serine/threonine-protein kinase meng-po.